Consider the following 440-residue polypeptide: Thymidine phosphorylase (440 aa).

It belongs to the thymidine/pyrimidine-nucleoside phosphorylase family. In terms of assembly, homodimer.

The catalysed reaction is thymidine + phosphate = 2-deoxy-alpha-D-ribose 1-phosphate + thymine. It participates in pyrimidine metabolism; dTMP biosynthesis via salvage pathway; dTMP from thymine: step 1/2. In terms of biological role, the enzymes which catalyze the reversible phosphorolysis of pyrimidine nucleosides are involved in the degradation of these compounds and in their utilization as carbon and energy sources, or in the rescue of pyrimidine bases for nucleotide synthesis. This Shigella boydii serotype 4 (strain Sb227) protein is Thymidine phosphorylase.